The sequence spans 128 residues: Ribonuclease P protein component (128 aa).

This sequence belongs to the RnpA family. In terms of assembly, consists of a catalytic RNA component (M1 or rnpB) and a protein subunit.

It carries out the reaction Endonucleolytic cleavage of RNA, removing 5'-extranucleotides from tRNA precursor.. RNaseP catalyzes the removal of the 5'-leader sequence from pre-tRNA to produce the mature 5'-terminus. It can also cleave other RNA substrates such as 4.5S RNA. The protein component plays an auxiliary but essential role in vivo by binding to the 5'-leader sequence and broadening the substrate specificity of the ribozyme. This is Ribonuclease P protein component from Methylococcus capsulatus (strain ATCC 33009 / NCIMB 11132 / Bath).